The chain runs to 487 residues: Fibroblast growth factor receptor-like 1 (487 aa).

The first 18 residues, Met-1–Ser-18, serve as a signal peptide directing secretion. At Ala-19–Pro-371 the chain is on the extracellular side. The Ig-like C2-type 1 domain occupies Pro-23–Ile-109. The cysteines at positions 45 and 93 are disulfide-linked. Asn-105 carries an N-linked (GlcNAc...) asparagine glycan. Residues Ser-115–Gly-125 are compositionally biased toward polar residues. Residues Ser-115–Ala-147 are disordered. Ig-like C2-type domains lie at Pro-141–Glu-231 and Pro-240–Thr-348. A disulfide bond links Cys-166 and Cys-215. Residues Asn-225, Asn-249, and Asn-287 are each glycosylated (N-linked (GlcNAc...) asparagine). Cys-262 and Cys-332 are joined by a disulfide. The helical transmembrane segment at Val-372 to Cys-392 threads the bilayer. The Cytoplasmic portion of the chain corresponds to Gln-393–Cys-487.

In terms of assembly, interacts with heparin and FGF2. In terms of tissue distribution, expressed in cartilaginous structures.

It localises to the cell membrane. Its function is as follows. Has a negative effect on cell proliferation. This is Fibroblast growth factor receptor-like 1 (FGFRL1) from Gallus gallus (Chicken).